Consider the following 198-residue polypeptide: Ribonuclease HII (198 aa).

Residues 10–198 enclose the RNase H type-2 domain; that stretch reads QLVAGVDEVG…PVKRALGLAS (189 aa). Residues Asp16, Glu17, and Asp108 each contribute to the a divalent metal cation site.

This sequence belongs to the RNase HII family. Mn(2+) is required as a cofactor. The cofactor is Mg(2+).

It localises to the cytoplasm. The enzyme catalyses Endonucleolytic cleavage to 5'-phosphomonoester.. In terms of biological role, endonuclease that specifically degrades the RNA of RNA-DNA hybrids. In Shigella sonnei (strain Ss046), this protein is Ribonuclease HII.